Consider the following 401-residue polypeptide: Methionyl-tRNA formyltransferase, mitochondrial (401 aa).

Residues 1–26 (MVKMRRITPTRLLFTCRYISNNASPP) constitute a mitochondrion transit peptide. (6R)-10-formyltetrahydrofolate contacts are provided by residues 18-20 (YIS) and 66-70 (VVTRS).

The protein belongs to the Fmt family. Post-translationally, phosphorylated by GCN2 in response to nutrient deprivation. Phosphorylation mediates retention of FMT1 in the cytoplasm.

The protein resides in the mitochondrion. The protein localises to the mitochondrion matrix. It is found in the cytoplasm. It carries out the reaction L-methionyl-tRNA(fMet) + (6R)-10-formyltetrahydrofolate = N-formyl-L-methionyl-tRNA(fMet) + (6S)-5,6,7,8-tetrahydrofolate + H(+). In terms of biological role, formylates methionyl-tRNA in mitochondria and the cytoplasm. Responsible for the formylation of the 8 N-terminally formylated (Nt-formylated) mitochondrial matrix proteins that are encoded by mitochondrial DNA. Nt-formylated proteins in the cytoplasm are strongly up-regulated in stationary phase or upon starvation for specific amino acids (His or Lys) and are targeted for degradation by a PSH1 E3 ubiquitin ligase-mediated fMet/N-end rule pathway. Increased Nt-formylation of cytosolic proteins appears to be important for adaptation to these stresses. Stationary phase-degraded Nt-formylated proteins include histone H3-like centromeric protein CSE4, Mediator complex subunit 3 (PGD1) and small ribosomal subunit protein uS8-A (RPS22A). The polypeptide is Methionyl-tRNA formyltransferase, mitochondrial (FMT1) (Saccharomyces cerevisiae (strain ATCC 204508 / S288c) (Baker's yeast)).